A 348-amino-acid chain; its full sequence is Ileal sodium/bile acid cotransporter (348 aa).

Topologically, residues 1–28 (MDNSSICNPNATICEGDSCIAPESNFNA) are extracellular. Residues Asn3 and Asn10 are each glycosylated (N-linked (GlcNAc...) asparagine). The chain crosses the membrane as a helical span at residues 29 to 49 (ILSVVMSTVLTILLALVMFSM). Topologically, residues 50-81 (GCNVELHKFLGHLRRPWGIVVGFLCQFGIMPL) are cytoplasmic. The helical transmembrane segment at 82–102 (TGFVLSVAFGILPVQAVVVLI) threads the bilayer. The Extracellular portion of the chain corresponds to 103–126 (QGCCPGGTASNILAYWVDGDMDLS). The chain crosses the membrane as a helical span at residues 127-147 (VSMTTCSTLLALGMMPLCLFI). At 148 to 157 (YTKMWVDSGT) the chain is on the cytoplasmic side. Residues 158-178 (IVIPYDSIGTSLVALVIPVSI) traverse the membrane as a helical segment. At 179–195 (GMYVNHKWPQKAKIILK) the chain is on the extracellular side. The helical transmembrane segment at 196–216 (IGSIAGAILIVLIAVVGGILY) threads the bilayer. The Cytoplasmic segment spans residues 217–224 (QSAWTIEP). The chain crosses the membrane as a helical span at residues 225-245 (KLWIIGTIYPIAGYGLGFFLA). Topologically, residues 246–284 (RIAGQPWYRCRTVALETGLQNTQLCSTIVQLSFSPEDLN) are extracellular. The chain crosses the membrane as a helical span at residues 285 to 305 (LVFTFPLIYSIFQIAFAAILL). Topologically, residues 306–348 (GAYVAYKKCHGKNNTELQEKTDNEMEPRSSFQETNKGFQPDEK) are cytoplasmic. Positions 322–332 (LQEKTDNEMEP) are enriched in basic and acidic residues. The interval 322-348 (LQEKTDNEMEPRSSFQETNKGFQPDEK) is disordered. Ser335 is subject to Phosphoserine.

Belongs to the bile acid:sodium symporter (BASS) (TC 2.A.28) family. Monomer and homodimer. As to expression, mainly expressed in ileum and kidney, lower expression in jejunum.

It is found in the membrane. It carries out the reaction taurocholate(out) + 2 Na(+)(out) = taurocholate(in) + 2 Na(+)(in). It catalyses the reaction cholate(out) + 2 Na(+)(out) = cholate(in) + 2 Na(+)(in). The enzyme catalyses taurochenodeoxycholate(out) + 2 Na(+)(out) = taurochenodeoxycholate(in) + 2 Na(+)(in). The catalysed reaction is tauroursodeoxycholate(out) + 2 Na(+)(out) = tauroursodeoxycholate(in) + 2 Na(+)(in). It carries out the reaction glycocholate(out) + 2 Na(+)(out) = glycocholate(in) + 2 Na(+)(in). It catalyses the reaction tauronorcholate(out) + 2 Na(+)(out) = tauronorcholate(in) + 2 Na(+)(in). The enzyme catalyses tauroallocholate(out) + 2 Na(+)(out) = tauroallocholate(in) + 2 Na(+)(in). The catalysed reaction is taurodeoxycholate(out) + 2 Na(+)(out) = taurodeoxycholate(in) + 2 Na(+)(in). It carries out the reaction tauro-beta-muricholate(out) + 2 Na(+)(out) = tauro-beta-muricholate(in) + 2 Na(+)(in). Its function is as follows. Plays a critical role in the sodium-dependent reabsorption of bile acids from the lumen of the small intestine. Transports various bile acids, unconjugated or conjugated, such as cholate and taurocholate. Also responsible for bile acid transport in the renal proximal tubules, a salvage mechanism that helps conserve bile acids. Works collaboratively with the Na(+)-taurocholate cotransporting polypeptide (NTCP), the organic solute transporter (OST), and the bile salt export pump (BSEP), to ensure efficacious biological recycling of bile acids during enterohepatic circulation. This Cricetulus griseus (Chinese hamster) protein is Ileal sodium/bile acid cotransporter (SLC10A2).